The chain runs to 78 residues: Cytochrome b-c1 complex subunit 10, mitochondrial (78 aa).

Topologically, residues 1-26 are mitochondrial matrix; that stretch reads MVSYVKGPAYKALSHFGKLNAPLVRS. The helical transmembrane segment at 27-46 threads the bilayer; that stretch reads YIPNLVFWGAAAGGAVATFT. Over 47 to 78 the chain is Mitochondrial intermembrane; that stretch reads EGVPLFQKTFYEKIPFFGQHWIYNPDPEDVPV.

This sequence belongs to the UQCR11/QCR10 family. Component of the ubiquinol-cytochrome c oxidoreductase (cytochrome b-c1 complex, complex III, CIII), a multisubunit enzyme composed of 10 subunits. The complex is composed of 3 respiratory subunits cytochrome b (COB), cytochrome c1 (CYT1) and Rieske protein (RIP1), 2 core protein subunits COR1 and QCR2, and 5 low-molecular weight protein subunits QCR6, QCR7, QCR8, QCR9 and QCR10. The complex exists as an obligatory dimer and forms supercomplexes (SCs) in the inner mitochondrial membrane with a monomer or a dimer of cytochrome c oxidase (complex IV, CIV), resulting in 2 different assemblies (supercomplexes III(2)IV and III(2)IV(2)).

It is found in the mitochondrion inner membrane. In terms of biological role, component of the ubiquinol-cytochrome c oxidoreductase, a multisubunit transmembrane complex that is part of the mitochondrial electron transport chain which drives oxidative phosphorylation. The complex plays an important role in the uptake of multiple carbon sources present in different host niches. The sequence is that of Cytochrome b-c1 complex subunit 10, mitochondrial from Candida albicans (strain SC5314 / ATCC MYA-2876) (Yeast).